Consider the following 427-residue polypeptide: Gamma-glutamyl phosphate reductase (427 aa).

The protein belongs to the gamma-glutamyl phosphate reductase family.

It is found in the cytoplasm. The catalysed reaction is L-glutamate 5-semialdehyde + phosphate + NADP(+) = L-glutamyl 5-phosphate + NADPH + H(+). The protein operates within amino-acid biosynthesis; L-proline biosynthesis; L-glutamate 5-semialdehyde from L-glutamate: step 2/2. In terms of biological role, catalyzes the NADPH-dependent reduction of L-glutamate 5-phosphate into L-glutamate 5-semialdehyde and phosphate. The product spontaneously undergoes cyclization to form 1-pyrroline-5-carboxylate. The sequence is that of Gamma-glutamyl phosphate reductase from Brucella melitensis biotype 2 (strain ATCC 23457).